A 232-amino-acid polypeptide reads, in one-letter code: Phosphatidylserine decarboxylase proenzyme (232 aa).

Ser-190 acts as the Schiff-base intermediate with substrate; via pyruvic acid in catalysis. A Pyruvic acid (Ser); by autocatalysis modification is found at Ser-190.

Belongs to the phosphatidylserine decarboxylase family. PSD-A subfamily. Heterodimer of a large membrane-associated beta subunit and a small pyruvoyl-containing alpha subunit. It depends on pyruvate as a cofactor. In terms of processing, is synthesized initially as an inactive proenzyme. Formation of the active enzyme involves a self-maturation process in which the active site pyruvoyl group is generated from an internal serine residue via an autocatalytic post-translational modification. Two non-identical subunits are generated from the proenzyme in this reaction, and the pyruvate is formed at the N-terminus of the alpha chain, which is derived from the carboxyl end of the proenzyme. The post-translation cleavage follows an unusual pathway, termed non-hydrolytic serinolysis, in which the side chain hydroxyl group of the serine supplies its oxygen atom to form the C-terminus of the beta chain, while the remainder of the serine residue undergoes an oxidative deamination to produce ammonia and the pyruvoyl prosthetic group on the alpha chain.

It localises to the cell membrane. It carries out the reaction a 1,2-diacyl-sn-glycero-3-phospho-L-serine + H(+) = a 1,2-diacyl-sn-glycero-3-phosphoethanolamine + CO2. It participates in phospholipid metabolism; phosphatidylethanolamine biosynthesis; phosphatidylethanolamine from CDP-diacylglycerol: step 2/2. Its function is as follows. Catalyzes the formation of phosphatidylethanolamine (PtdEtn) from phosphatidylserine (PtdSer). The polypeptide is Phosphatidylserine decarboxylase proenzyme (Rhizobium johnstonii (strain DSM 114642 / LMG 32736 / 3841) (Rhizobium leguminosarum bv. viciae)).